Reading from the N-terminus, the 228-residue chain is Protein-L-isoaspartate O-methyltransferase (228 aa).

The active site involves serine 74.

It belongs to the methyltransferase superfamily. L-isoaspartyl/D-aspartyl protein methyltransferase family.

Its subcellular location is the cytoplasm. It carries out the reaction [protein]-L-isoaspartate + S-adenosyl-L-methionine = [protein]-L-isoaspartate alpha-methyl ester + S-adenosyl-L-homocysteine. Functionally, catalyzes the methyl esterification of L-isoaspartyl residues in peptides and proteins that result from spontaneous decomposition of normal L-aspartyl and L-asparaginyl residues. It plays a role in the repair and/or degradation of damaged proteins. The chain is Protein-L-isoaspartate O-methyltransferase from Methylorubrum extorquens (strain PA1) (Methylobacterium extorquens).